The chain runs to 217 residues: Gas vesicle protein F2 (217 aa).

The protein belongs to the gas vesicle GvpF/GvpL family. Binds GvpA.

Its subcellular location is the gas vesicle. It is found in the cytoplasm. In terms of biological role, a minor component of the gas vesicle, may be involved in preventing GvpA aggregation during gas vesicle nucleation. Gas vesicles are hollow, gas filled proteinaceous nanostructures found in several microbial planktonic microorganisms. They allow positioning of halobacteria at the optimal depth for growth in the poorly aerated, shallow brine pools of their habitat. Functionally, expression of 2 c-vac DNA fragments containing 2 divergently transcribed regions (gvpE-gvpF-gvpG-gvpH-gvpI-gvpJ-gvpK-gvpL-gvpM and gvpA-gvpC-gvpN-gvpO) allows H.volcanii to produce gas vesicles. Note that gvpD is not necessary for gas vesicle formation. The protein is Gas vesicle protein F2 of Halobacterium salinarum (strain ATCC 700922 / JCM 11081 / NRC-1) (Halobacterium halobium).